Consider the following 364-residue polypeptide: Delta(7)-sterol 5(6)-desaturase (364 aa).

Helical transmembrane passes span 94–114, 142–162, and 181–201; these read FFSLWAVVTVFGLLLYLITAS, LAVSAIPTMSLLTVPWFMLEL, and KLLIEYATFIFFTDCGIYLAH. The 125-residue stretch at 188 to 312 folds into the Fatty acid hydroxylase domain; it reads TFIFFTDCGI…FTTLWDRLGG (125 aa). The Histidine box-1 signature appears at 201–205; the sequence is HRWLH. The short motif at 214–218 is the Histidine box-2 element; the sequence is HKPHH. The helical transmembrane segment at 249–269 threads the bilayer; that stretch reads ILPLHKISYLILFTFVNFWSV. The Histidine box-3 motif lies at 289 to 293; it reads HTVHH.

This sequence belongs to the sterol desaturase family. Requires Fe cation as cofactor.

It localises to the endoplasmic reticulum membrane. It catalyses the reaction a Delta(7)-sterol + 2 Fe(II)-[cytochrome b5] + O2 + 2 H(+) = a Delta(5),Delta(7)-sterol + 2 Fe(III)-[cytochrome b5] + 2 H2O. It participates in steroid metabolism; ergosterol biosynthesis; ergosterol from zymosterol: step 3/5. In terms of biological role, catalyzes the introduction of a C-5 double bond in the B ring of ergosterol. May contribute to the regulation of ergosterol biosynthesis. The polypeptide is Delta(7)-sterol 5(6)-desaturase (ERG3) (Candida glabrata (strain ATCC 2001 / BCRC 20586 / JCM 3761 / NBRC 0622 / NRRL Y-65 / CBS 138) (Yeast)).